A 404-amino-acid chain; its full sequence is Glucose-1-phosphate adenylyltransferase (404 aa).

Alpha-D-glucose 1-phosphate-binding positions include Y99, G164, 179–180 (EK), and S197.

This sequence belongs to the bacterial/plant glucose-1-phosphate adenylyltransferase family.

The enzyme catalyses alpha-D-glucose 1-phosphate + ATP + H(+) = ADP-alpha-D-glucose + diphosphate. Its pathway is capsule biogenesis; capsule polysaccharide biosynthesis. The protein operates within glycan biosynthesis; glycogen biosynthesis. Involved in the biosynthesis of ADP-glucose, a building block, required in the biosynthesis of maltose-1-phosphate (M1P) and in the elongation reactions to produce linear alpha-1,4-glucans. Catalyzes the reaction between ATP and alpha-D-glucose 1-phosphate (G1P) to produce pyrophosphate and ADP-Glc. The sequence is that of Glucose-1-phosphate adenylyltransferase from Mycobacteroides abscessus (strain ATCC 19977 / DSM 44196 / CCUG 20993 / CIP 104536 / JCM 13569 / NCTC 13031 / TMC 1543 / L948) (Mycobacterium abscessus).